The following is a 1102-amino-acid chain: Carbamoyl phosphate synthase large chain (1102 aa).

A carboxyphosphate synthetic domain region spans residues 1–408; sequence MPKRTDIQSV…ALQKALRSLE (408 aa). Residues R129, R175, G181, G182, E214, I216, E221, G247, V248, H249, Q291, and E305 each contribute to the ATP site. The ATP-grasp 1 domain maps to 138 to 334; sequence AVRAKIGHGE…IAKIAAKLAV (197 aa). Positions 291, 305, and 307 each coordinate Mg(2+). Residues Q291, E305, and N307 each coordinate Mn(2+). The interval 409-551 is oligomerization domain; it reads KKGSQFTFVG…YFYSSYDEES (143 aa). A carbamoyl phosphate synthetic domain region spans residues 552 to 954; it reads EVAPREKPAV…AYAKSQAGAY (403 aa). The ATP-grasp 2 domain occupies 682 to 873; it reads GQVLAEAGLP…LAKAAARISL (192 aa). ATP is bound by residues R718, R757, L759, E764, G789, I790, H791, S792, Q832, and E844. Residues Q832, E844, and N846 each contribute to the Mg(2+) site. Residues Q832, E844, and N846 each coordinate Mn(2+). One can recognise an MGS-like domain in the interval 955–1100; that stretch reads GPLPTKGRAF…QEHAEHLTAA (146 aa). Residues 955–1102 form an allosteric domain region; that stretch reads GPLPTKGRAF…HAEHLTAARD (148 aa).

Belongs to the CarB family. As to quaternary structure, composed of two chains; the small (or glutamine) chain promotes the hydrolysis of glutamine to ammonia, which is used by the large (or ammonia) chain to synthesize carbamoyl phosphate. Tetramer of heterodimers (alpha,beta)4. It depends on Mg(2+) as a cofactor. Mn(2+) is required as a cofactor.

It catalyses the reaction hydrogencarbonate + L-glutamine + 2 ATP + H2O = carbamoyl phosphate + L-glutamate + 2 ADP + phosphate + 2 H(+). The enzyme catalyses hydrogencarbonate + NH4(+) + 2 ATP = carbamoyl phosphate + 2 ADP + phosphate + 2 H(+). It functions in the pathway amino-acid biosynthesis; L-arginine biosynthesis; carbamoyl phosphate from bicarbonate: step 1/1. It participates in pyrimidine metabolism; UMP biosynthesis via de novo pathway; (S)-dihydroorotate from bicarbonate: step 1/3. Large subunit of the glutamine-dependent carbamoyl phosphate synthetase (CPSase). CPSase catalyzes the formation of carbamoyl phosphate from the ammonia moiety of glutamine, carbonate, and phosphate donated by ATP, constituting the first step of 2 biosynthetic pathways, one leading to arginine and/or urea and the other to pyrimidine nucleotides. The large subunit (synthetase) binds the substrates ammonia (free or transferred from glutamine from the small subunit), hydrogencarbonate and ATP and carries out an ATP-coupled ligase reaction, activating hydrogencarbonate by forming carboxy phosphate which reacts with ammonia to form carbamoyl phosphate. The chain is Carbamoyl phosphate synthase large chain from Streptomyces avermitilis (strain ATCC 31267 / DSM 46492 / JCM 5070 / NBRC 14893 / NCIMB 12804 / NRRL 8165 / MA-4680).